A 462-amino-acid polypeptide reads, in one-letter code: WD repeat-containing protein WRAP73 (462 aa).

WD repeat units lie at residues 46–86 (TCLD…WHCK), 89–129 (EGSA…VSYI), 176–210 (TDTQ…YSLD), and 221–260 (EWSL…MITE). At Ser-281 the chain carries Phosphoserine. WD repeat units lie at residues 328-369 (NPRM…LFVV) and 371-410 (EHMS…SVQV).

As to quaternary structure, interacts with SSX2IP. In terms of tissue distribution, ubiquitous.

Its subcellular location is the cytoplasm. The protein localises to the cytoskeleton. It is found in the microtubule organizing center. The protein resides in the centrosome. In terms of biological role, the SSX2IP:WRAP73 complex is proposed to act as regulator of spindle anchoring at the mitotic centrosome. Required for the centrosomal localization of SSX2IP and normal mitotic bipolar spindle morphology. Required for the targeting of centriole satellite proteins to centrosomes such as of PCM1, SSX2IP, CEP290 and PIBF1/CEP90. Required for ciliogenesis and involved in the removal of the CEP97:CCP110 complex from the mother centriole. Involved in ciliary vesicle formation at the mother centriole and required for the docking of vesicles to the basal body during ciliogenesis; may promote docking of RAB8A- and ARL13B-containing vesicles. The protein is WD repeat-containing protein WRAP73 (Wrap73) of Mus musculus (Mouse).